We begin with the raw amino-acid sequence, 269 residues long: Tryptophan synthase alpha chain (269 aa).

Residues Glu-49 and Asp-60 each act as proton acceptor in the active site.

It belongs to the TrpA family. In terms of assembly, tetramer of two alpha and two beta chains.

It catalyses the reaction (1S,2R)-1-C-(indol-3-yl)glycerol 3-phosphate + L-serine = D-glyceraldehyde 3-phosphate + L-tryptophan + H2O. It participates in amino-acid biosynthesis; L-tryptophan biosynthesis; L-tryptophan from chorismate: step 5/5. Its function is as follows. The alpha subunit is responsible for the aldol cleavage of indoleglycerol phosphate to indole and glyceraldehyde 3-phosphate. This Enterobacter sp. (strain 638) protein is Tryptophan synthase alpha chain.